We begin with the raw amino-acid sequence, 125 residues long: Holo-[acyl-carrier-protein] synthase (125 aa).

Residues Asp-8 and Glu-57 each coordinate Mg(2+).

The protein belongs to the P-Pant transferase superfamily. AcpS family. It depends on Mg(2+) as a cofactor.

It localises to the cytoplasm. The catalysed reaction is apo-[ACP] + CoA = holo-[ACP] + adenosine 3',5'-bisphosphate + H(+). Transfers the 4'-phosphopantetheine moiety from coenzyme A to a Ser of acyl-carrier-protein. The protein is Holo-[acyl-carrier-protein] synthase of Koribacter versatilis (strain Ellin345).